The chain runs to 363 residues: MSTQPIKVLIVDDSALIRSLLTDIINSQTDMEVVGVAPDPLVAREKIKALNPDVLTLDVEMPRMDGLVFLEKLMRLRPMPVLMVSSLTEKSSFLTLRALELGAVDFVTKPKIDISRGMQEYAREITDKLRVAAKARVRQPPHVHLSVERKNTADAVLPMEHRTFSSTEKIIVIGASTGGTEALKSFLVAMPADSPGILITQHMPEAFTRTFAQRLNSLCRISVKEAEHGERILPGHAYVAPGNRHLLLARSGANYVVELSDGPPVSRHRPSVDVLFRSAANRAGRNAVGIIMTGMGDDGAAGMLEMREAGAYTFAQDEKSCVVFGMPKEAIARGGVDEVAPLGEMPRRLFGWLESQGNRAFRV.

A Response regulatory domain is found at 7-124 (KVLIVDDSAL…SRGMQEYARE (118 aa)). Residue aspartate 58 is modified to 4-aspartylphosphate. The region spanning 164–356 (FSSTEKIIVI…RRLFGWLESQ (193 aa)) is the CheB-type methylesterase domain. Active-site residues include serine 176, histidine 202, and aspartate 298.

Belongs to the CheB family. In terms of processing, phosphorylated by CheA. Phosphorylation of the N-terminal regulatory domain activates the methylesterase activity.

The protein localises to the cytoplasm. The catalysed reaction is [protein]-L-glutamate 5-O-methyl ester + H2O = L-glutamyl-[protein] + methanol + H(+). It catalyses the reaction L-glutaminyl-[protein] + H2O = L-glutamyl-[protein] + NH4(+). Involved in chemotaxis. Part of a chemotaxis signal transduction system that modulates chemotaxis in response to various stimuli. Catalyzes the demethylation of specific methylglutamate residues introduced into the chemoreceptors (methyl-accepting chemotaxis proteins or MCP) by CheR. Also mediates the irreversible deamidation of specific glutamine residues to glutamic acid. The sequence is that of Protein-glutamate methylesterase/protein-glutamine glutaminase 1 from Geobacter metallireducens (strain ATCC 53774 / DSM 7210 / GS-15).